The primary structure comprises 354 residues: Arginase-2, mitochondrial (354 aa).

The N-terminal 22 residues, 1-22 (MFLRSSVSRLLHGQIPCALTRS), are a transit peptide targeting the mitochondrion. H120, D143, H145, and D147 together coordinate Mn(2+). Substrate contacts are provided by residues 145–149 (HADIN), 156–158 (SGN), and E202. The Mn(2+) site is built by D251 and D253. Positions 265 and 296 each coordinate substrate.

This sequence belongs to the arginase family. As to quaternary structure, homotrimer. Mn(2+) is required as a cofactor.

The protein localises to the mitochondrion. The enzyme catalyses L-arginine + H2O = urea + L-ornithine. It functions in the pathway nitrogen metabolism; urea cycle; L-ornithine and urea from L-arginine: step 1/1. Its function is as follows. May play a role in the regulation of extra-urea cycle arginine metabolism and also in down-regulation of nitric oxide synthesis. Extrahepatic arginase functions to regulate L-arginine bioavailability to nitric oxid synthase (NOS). Arginine metabolism is a critical regulator of innate and adaptive immune responses. Seems to be involved in negative regulation of the survival capacity of activated T cells. May suppress inflammation-related signaling in asthmatic airway epithelium. May play a role in promoting prenatal immune suppression. Regulates RPS6KB1 signaling, which promotes endothelial cell senescence and inflammation and implicates NOS3/eNOS dysfunction. Can inhibit endothelial autophagy independently of its enzymatic activity implicating mTORC2 signaling. Involved in vascular smooth muscle cell senescence and apoptosis independently of its enzymatic activity. The protein is Arginase-2, mitochondrial (Arg2) of Rattus norvegicus (Rat).